Reading from the N-terminus, the 174-residue chain is Ribosome maturation factor RimM (174 aa).

The PRC barrel domain occupies 91–164 (DDAWYPHQLQ…KVVLSPPGGL (74 aa)).

This sequence belongs to the RimM family. Binds ribosomal protein uS19.

It is found in the cytoplasm. An accessory protein needed during the final step in the assembly of 30S ribosomal subunit, possibly for assembly of the head region. Essential for efficient processing of 16S rRNA. May be needed both before and after RbfA during the maturation of 16S rRNA. It has affinity for free ribosomal 30S subunits but not for 70S ribosomes. The chain is Ribosome maturation factor RimM from Kineococcus radiotolerans (strain ATCC BAA-149 / DSM 14245 / SRS30216).